Here is a 571-residue protein sequence, read N- to C-terminus: Phosphatidylinositol-3,5-bisphosphate 3-phosphatase MTMR2 (571 aa).

Residues methionine 1–glycine 67 form the GRAM domain. The Myotubularin phosphatase domain maps to glycine 133–tyrosine 508. The a 1,2-diacyl-sn-glycero-3-phospho-(1D-myo-inositol-3,5-bisphosphate) site is built by asparagine 258, asparagine 283, and isoleucine 284. A 1,2-diacyl-sn-glycero-3-phospho-(1D-myo-inositol-3-phosphate) is bound by residues asparagine 258, asparagine 283, and isoleucine 284. Cysteine 345 acts as the Phosphocysteine intermediate in catalysis. Positions 346, 347, 348, 349, 350, 351, 387, and 391 each coordinate a 1,2-diacyl-sn-glycero-3-phospho-(1D-myo-inositol-3,5-bisphosphate). Serine 346, aspartate 347, glycine 348, tryptophan 349, aspartate 350, and arginine 351 together coordinate a 1,2-diacyl-sn-glycero-3-phospho-(1D-myo-inositol-3-phosphate). Residue arginine 391 coordinates a 1,2-diacyl-sn-glycero-3-phospho-(1D-myo-inositol-3-phosphate). A coiled-coil region spans residues valine 521 to serine 553. Positions arginine 544–valine 571 are disordered.

The protein belongs to the protein-tyrosine phosphatase family. Non-receptor class myotubularin subfamily. As to quaternary structure, homooligomer and heterooligomer.

It is found in the cytoplasm. The protein localises to the early endosome membrane. It carries out the reaction a 1,2-diacyl-sn-glycero-3-phospho-(1D-myo-inositol-3,5-bisphosphate) + H2O = a 1,2-diacyl-sn-glycero-3-phospho-(1D-myo-inositol-5-phosphate) + phosphate. The enzyme catalyses a 1,2-diacyl-sn-glycero-3-phospho-(1D-myo-inositol-3-phosphate) + H2O = a 1,2-diacyl-sn-glycero-3-phospho-(1D-myo-inositol) + phosphate. The catalysed reaction is 1,2-dioctanoyl-sn-glycero-3-phospho-(1-D-myo-inositol-3-phosphate) + H2O = 1,2-dioctanoyl-sn-glycero-3-phospho-(1D-myo-inositol) + phosphate. It catalyses the reaction 1,2-dioctanoyl-sn-glycero-3-phospho-(1D-myo-inositol-3,5-bisphosphate) + H2O = 1,2-dioctanoyl-sn-glycero-3-phospho-(1D-myo-inositol-5-phosphate) + phosphate. Functionally, lipid phosphatase that specifically dephosphorylates the D-3 position of phosphatidylinositol 3-phosphate and phosphatidylinositol 3,5-bisphosphate, generating phosphatidylinositol and phosphatidylinositol 5-phosphate. Regulates the level of these phosphoinositides critical for various biological processes including autophagy initiation and autophagosome maturation. This Gallus gallus (Chicken) protein is Phosphatidylinositol-3,5-bisphosphate 3-phosphatase MTMR2.